The sequence spans 321 residues: GDP-L-fucose synthase (321 aa).

14-20 (GGSGLVG) is a binding site for NADP(+). The Proton donor/acceptor role is filled by Y143. NADP(+) contacts are provided by residues K147, 170 to 173 (PTNV), and H186. K194, W208, R215, and D277 together coordinate substrate.

The protein belongs to the NAD(P)-dependent epimerase/dehydratase family. Fucose synthase subfamily. In terms of assembly, homodimer.

The enzyme catalyses GDP-beta-L-fucose + NADP(+) = GDP-4-dehydro-alpha-D-rhamnose + NADPH + H(+). Its pathway is nucleotide-sugar biosynthesis; GDP-L-fucose biosynthesis via de novo pathway; GDP-L-fucose from GDP-alpha-D-mannose: step 2/2. Functionally, catalyzes the two-step NADP-dependent conversion of GDP-4-dehydro-6-deoxy-D-mannose to GDP-fucose, involving an epimerase and a reductase reaction. This chain is GDP-L-fucose synthase, found in Mus musculus (Mouse).